The chain runs to 300 residues: Porphobilinogen deaminase (300 aa).

Residue C242 is modified to S-(dipyrrolylmethanemethyl)cysteine.

This sequence belongs to the HMBS family. Monomer. Dipyrromethane serves as cofactor.

It catalyses the reaction 4 porphobilinogen + H2O = hydroxymethylbilane + 4 NH4(+). Its pathway is porphyrin-containing compound metabolism; protoporphyrin-IX biosynthesis; coproporphyrinogen-III from 5-aminolevulinate: step 2/4. Its function is as follows. Tetrapolymerization of the monopyrrole PBG into the hydroxymethylbilane pre-uroporphyrinogen in several discrete steps. This is Porphobilinogen deaminase from Rickettsia bellii (strain OSU 85-389).